We begin with the raw amino-acid sequence, 270 residues long: Hemin import ATP-binding protein HmuV (270 aa).

The region spanning 2-238 (LTVENIEVTL…VTLSQAYGCT (237 aa)) is the ABC transporter domain. 34–41 (GHNGSGKT) provides a ligand contact to ATP.

The protein belongs to the ABC transporter superfamily. Heme (hemin) importer (TC 3.A.1.14.5) family. The complex is composed of two ATP-binding proteins (HmuV), two transmembrane proteins (HmuU) and a solute-binding protein (HmuT).

The protein localises to the cell inner membrane. Its function is as follows. Part of the ABC transporter complex HmuTUV involved in hemin import. Responsible for energy coupling to the transport system. The polypeptide is Hemin import ATP-binding protein HmuV (Jannaschia sp. (strain CCS1)).